A 340-amino-acid polypeptide reads, in one-letter code: Guanine nucleotide-binding protein G(I)/G(S)/G(T) subunit beta-3 (340 aa).

7 WD repeats span residues 53–83 (GHLAKIYAMHWATDSKLLVSASQDGKLIVWD), 95–125 (LRSSWVMTCAYAPSGNFVACGGLDNMCSIYS), 141–170 (AHTGYLSCCRFLDDNNIVTSSGDTTCALWD), 182–212 (GHTGDCMSLAVSPDFKLFISGACDASAKLWD), 224–254 (GHESDINAICFFPNGEAICTGSDDASCRLFD), 268–298 (SIICGITSVAFSLSGRLLFAGYDDFNCNIWD), and 310–340 (GHDNRVSCLGVTADGMAVATGSWDSFLKVWN).

This sequence belongs to the WD repeat G protein beta family. As to quaternary structure, g proteins are composed of 3 units, alpha, beta and gamma. Interacts with RASD2.

Its subcellular location is the cytoplasm. It localises to the perinuclear region. In terms of biological role, guanine nucleotide-binding proteins (G proteins) are involved as a modulator or transducer in various transmembrane signaling systems. The beta and gamma chains are required for the GTPase activity, for replacement of GDP by GTP, and for G protein-effector interaction. In Canis lupus familiaris (Dog), this protein is Guanine nucleotide-binding protein G(I)/G(S)/G(T) subunit beta-3 (GNB3).